Here is an 89-residue protein sequence, read N- to C-terminus: 10 kDa fusion protein (89 aa).

The tract at residues 1–29 is disordered; it reads MDENDGENLLTQPDDTGNSTNGVYAAGAP. The span at 9–22 shows a compositional bias: polar residues; it reads LLTQPDDTGNSTNG. An N-linked (GlcNAc...) asparagine; by host glycan is attached at N18.

It belongs to the poxviruses fusion protein family. In terms of assembly, homotrimer, covalently linked.

It localises to the virion membrane. The chain is 10 kDa fusion protein from Capra hircus (Goat).